Reading from the N-terminus, the 234-residue chain is 1-(5-phosphoribosyl)-5-[(5-phosphoribosylamino)methylideneamino] imidazole-4-carboxamide isomerase (234 aa).

Asp-9 serves as the catalytic Proton acceptor. Asp-131 acts as the Proton donor in catalysis.

Belongs to the HisA/HisF family.

It is found in the cytoplasm. It carries out the reaction 1-(5-phospho-beta-D-ribosyl)-5-[(5-phospho-beta-D-ribosylamino)methylideneamino]imidazole-4-carboxamide = 5-[(5-phospho-1-deoxy-D-ribulos-1-ylimino)methylamino]-1-(5-phospho-beta-D-ribosyl)imidazole-4-carboxamide. Its pathway is amino-acid biosynthesis; L-histidine biosynthesis; L-histidine from 5-phospho-alpha-D-ribose 1-diphosphate: step 4/9. In Staphylococcus aureus (strain bovine RF122 / ET3-1), this protein is 1-(5-phosphoribosyl)-5-[(5-phosphoribosylamino)methylideneamino] imidazole-4-carboxamide isomerase.